Reading from the N-terminus, the 295-residue chain is Protein FAM110A (295 aa).

Disordered regions lie at residues 117–148 (PVSPAEASRTPGRAEGARQPPLATPPRPPPSI) and 160–191 (PASPIQPCPSPGPAAASSPVRPPGLQRSKSDL). 2 stretches are compositionally biased toward pro residues: residues 138 to 147 (LATPPRPPPS) and 160 to 171 (PASPIQPCPSPG).

It belongs to the FAM110 family. In terms of assembly, may interact with CSPP1.

Its subcellular location is the cytoplasm. It localises to the cytoskeleton. The protein localises to the microtubule organizing center. It is found in the centrosome. The protein resides in the spindle pole. The chain is Protein FAM110A (FAM110A) from Bos taurus (Bovine).